We begin with the raw amino-acid sequence, 151 residues long: Transcriptional repressor NrdR (151 aa).

Residues 3–34 fold into a zinc finger; sequence CPKCGSLNDKVLETRQSKEGVVIKRRRECLNC. In terms of domain architecture, ATP-cone spans 49–139; that stretch reads IEVIKKNNTV…VFDGFEDIKD (91 aa).

This sequence belongs to the NrdR family. Zn(2+) serves as cofactor.

Functionally, negatively regulates transcription of bacterial ribonucleotide reductase nrd genes and operons by binding to NrdR-boxes. The sequence is that of Transcriptional repressor NrdR from Sulfurihydrogenibium sp. (strain YO3AOP1).